The sequence spans 453 residues: GTPase Der (453 aa).

EngA-type G domains are found at residues 4-169 (PIVA…PPTT) and 177-352 (IKIA…EEHK). GTP-binding positions include 10–17 (GRPNVGKS), 57–61 (DTGGL), 120–123 (NKCE), 183–190 (GRPNVGKS), 230–234 (DTAGI), and 295–298 (NKWD). A KH-like domain is found at 353-438 (RRVSTSVINE…PIRLLWRSKK (86 aa)).

This sequence belongs to the TRAFAC class TrmE-Era-EngA-EngB-Septin-like GTPase superfamily. EngA (Der) GTPase family. As to quaternary structure, associates with the 50S ribosomal subunit.

Its function is as follows. GTPase that plays an essential role in the late steps of ribosome biogenesis. The chain is GTPase Der from Trichormus variabilis (strain ATCC 29413 / PCC 7937) (Anabaena variabilis).